Here is a 137-residue protein sequence, read N- to C-terminus: Large ribosomal subunit protein uL24 (137 aa).

Belongs to the universal ribosomal protein uL24 family. As to quaternary structure, part of the 50S ribosomal subunit.

Functionally, one of two assembly initiator proteins, it binds directly to the 5'-end of the 23S rRNA, where it nucleates assembly of the 50S subunit. Its function is as follows. Located at the polypeptide exit tunnel on the outside of the subunit. This chain is Large ribosomal subunit protein uL24, found in Sulfurisphaera tokodaii (strain DSM 16993 / JCM 10545 / NBRC 100140 / 7) (Sulfolobus tokodaii).